The sequence spans 32 residues: Alcohol dehydrogenase-related 31 kDa protein (32 aa).

Residue 11–32 (YVADCGGIALETSXVLMTKNIA) participates in NAD(+) binding.

It belongs to the short-chain dehydrogenases/reductases (SDR) family.

This chain is Alcohol dehydrogenase-related 31 kDa protein (Adhr), found in Drosophila yakuba (Fruit fly).